A 124-amino-acid polypeptide reads, in one-letter code: Small ribosomal subunit protein uS12 (124 aa).

The disordered stretch occupies residues 1–25 (MPTFNQLVRNGRKPPRWKTSSPALE). The residue at position 89 (aspartate 89) is a 3-methylthioaspartic acid. The disordered stretch occupies residues 104–124 (TAGVANRKQSRSKYGAKRPKS). The segment covering 111 to 124 (KQSRSKYGAKRPKS) has biased composition (basic residues).

The protein belongs to the universal ribosomal protein uS12 family. In terms of assembly, part of the 30S ribosomal subunit. Contacts proteins S8 and S17. May interact with IF1 in the 30S initiation complex.

In terms of biological role, with S4 and S5 plays an important role in translational accuracy. Functionally, interacts with and stabilizes bases of the 16S rRNA that are involved in tRNA selection in the A site and with the mRNA backbone. Located at the interface of the 30S and 50S subunits, it traverses the body of the 30S subunit contacting proteins on the other side and probably holding the rRNA structure together. The combined cluster of proteins S8, S12 and S17 appears to hold together the shoulder and platform of the 30S subunit. The polypeptide is Small ribosomal subunit protein uS12 (Solibacter usitatus (strain Ellin6076)).